The primary structure comprises 452 residues: FAD transporter (452 aa).

The next 12 helical transmembrane spans lie at 21–41, 49–69, 96–116, 131–151, 167–187, 199–219, 248–270, 283–303, 324–344, 357–377, 392–412, and 417–437; these read LPNL…TFFI, LAAI…AIGV, ALLL…IFIE, LIHD…LLMV, MIMT…IFGI, AIAT…LLII, AALM…AHID, LESV…PFIA, FILV…QPLA, LSFY…VIIF, VINL…GSYI, and GLLL…YYLA.

The protein belongs to the multi antimicrobial extrusion (MATE) (TC 2.A.66.1) family.

It localises to the cell inner membrane. Flavin adenine dinucleotide (FAD) transporter that facilitates export of flavin electron shuttles. This Shewanella oneidensis (strain ATCC 700550 / JCM 31522 / CIP 106686 / LMG 19005 / NCIMB 14063 / MR-1) protein is FAD transporter.